A 549-amino-acid chain; its full sequence is Coiled-coil domain-containing protein 102A (549 aa).

3 disordered regions span residues 1–61 (MSHG…TAPA), 135–195 (LAGA…GSQE), and 207–248 (PEEP…EEDA). A phosphoserine mark is found at Ser-12, Ser-26, and Ser-28. Residues 37-55 (SLPPTPPSGTPSPGPPPSL) are compositionally biased toward pro residues. Positions 69-160 (ESREELRLRE…ARGRELARLR (92 aa)) form a coiled coil. 2 stretches are compositionally biased toward basic and acidic residues: residues 135–158 (LAGA…ELAR) and 165–187 (AADK…DIGA). Coiled-coil stretches lie at residues 263 to 398 (KVLL…NASA) and 426 to 517 (KLKK…NAPL). 2 disordered regions span residues 472–496 (ELDE…QSEN) and 509–549 (RRQQ…IQVA). Residues 530–549 (EAGDGASDLDEDEDLQIQVA) show a composition bias toward acidic residues. The residue at position 536 (Ser-536) is a Phosphoserine.

The protein is Coiled-coil domain-containing protein 102A (Ccdc102a) of Mus musculus (Mouse).